Here is a 1259-residue protein sequence, read N- to C-terminus: Telomerase reverse transcriptase (1259 aa).

The Reverse transcriptase domain maps to 742 to 1067 (RGEPRKAVRH…SFMPWSGLLI (326 aa)). Asp837, Asp999, and Asp1000 together coordinate Mg(2+).

It belongs to the reverse transcriptase family. Telomerase subfamily. As to quaternary structure, component of the telomerase ribonucleoprotein complex. As to expression, expressed in shoot apices and immature embryos.

The protein localises to the nucleus. Its subcellular location is the chromosome. It is found in the telomere. The enzyme catalyses DNA(n) + a 2'-deoxyribonucleoside 5'-triphosphate = DNA(n+1) + diphosphate. Its function is as follows. Telomerase is a ribonucleoprotein enzyme essential for the replication of chromosome termini in most eukaryotes. It elongates telomeres. It is a reverse transcriptase that adds simple sequence repeats to chromosome ends by copying a template sequence within the RNA component of the enzyme. In Oryza sativa subsp. japonica (Rice), this protein is Telomerase reverse transcriptase (TERT).